The sequence spans 293 residues: Phosphatidylserine decarboxylase proenzyme (293 aa).

Residues D88, H144, and S247 each act as charge relay system; for autoendoproteolytic cleavage activity in the active site. S247 serves as the catalytic Schiff-base intermediate with substrate; via pyruvic acid; for decarboxylase activity. The residue at position 247 (S247) is a Pyruvic acid (Ser); by autocatalysis.

The protein belongs to the phosphatidylserine decarboxylase family. PSD-B subfamily. Prokaryotic type I sub-subfamily. Heterodimer of a large membrane-associated beta subunit and a small pyruvoyl-containing alpha subunit. Pyruvate serves as cofactor. Post-translationally, is synthesized initially as an inactive proenzyme. Formation of the active enzyme involves a self-maturation process in which the active site pyruvoyl group is generated from an internal serine residue via an autocatalytic post-translational modification. Two non-identical subunits are generated from the proenzyme in this reaction, and the pyruvate is formed at the N-terminus of the alpha chain, which is derived from the carboxyl end of the proenzyme. The autoendoproteolytic cleavage occurs by a canonical serine protease mechanism, in which the side chain hydroxyl group of the serine supplies its oxygen atom to form the C-terminus of the beta chain, while the remainder of the serine residue undergoes an oxidative deamination to produce ammonia and the pyruvoyl prosthetic group on the alpha chain. During this reaction, the Ser that is part of the protease active site of the proenzyme becomes the pyruvoyl prosthetic group, which constitutes an essential element of the active site of the mature decarboxylase.

The protein localises to the cell membrane. It carries out the reaction a 1,2-diacyl-sn-glycero-3-phospho-L-serine + H(+) = a 1,2-diacyl-sn-glycero-3-phosphoethanolamine + CO2. The protein operates within phospholipid metabolism; phosphatidylethanolamine biosynthesis; phosphatidylethanolamine from CDP-diacylglycerol: step 2/2. Functionally, catalyzes the formation of phosphatidylethanolamine (PtdEtn) from phosphatidylserine (PtdSer). The sequence is that of Phosphatidylserine decarboxylase proenzyme from Xylella fastidiosa (strain M23).